Reading from the N-terminus, the 191-residue chain is Cytochrome c oxidase assembly protein CtaG (191 aa).

The Cytoplasmic segment spans residues 1-9 (MSLSPHQKT). Residues 10 to 30 (AGGLVLVVAVMGAASFAAVPF) form a helical; Signal-anchor for type II membrane protein membrane-spanning segment. Residues 31–191 (YNWFCRVTGF…LAAESATDVN (161 aa)) are Periplasmic-facing.

Belongs to the COX11/CtaG family.

The protein localises to the cell inner membrane. Exerts its effect at some terminal stage of cytochrome c oxidase synthesis, probably by being involved in the insertion of the copper B into subunit I. The chain is Cytochrome c oxidase assembly protein CtaG from Cereibacter sphaeroides (strain ATCC 17029 / ATH 2.4.9) (Rhodobacter sphaeroides).